A 354-amino-acid chain; its full sequence is Inositol-tetrakisphosphate 1-kinase 1 (354 aa).

A compositionally biased stretch (basic and acidic residues) spans 1–16; it reads MRVHEEASEDKEREVE. Residues 1-24 form a disordered region; it reads MRVHEEASEDKEREVEEAPDLMPL. Lysine 53 and lysine 95 together coordinate 1D-myo-inositol 1,3,4-trisphosphate. 2 residues coordinate ATP: arginine 130 and lysine 180. Positions 140-347 constitute an ATP-grasp domain; sequence LNLSNAYGEV…FLLSLVQNKY (208 aa). Residues histidine 191 and lysine 223 each contribute to the 1D-myo-inositol 1,3,4-trisphosphate site. ATP contacts are provided by residues 212–223 and serine 238; that span reads QEFVNHGGILFK. Residues aspartate 303, aspartate 318, and asparagine 320 each coordinate Mg(2+). Asparagine 320 lines the 1D-myo-inositol 1,3,4-trisphosphate pocket.

It belongs to the ITPK1 family. Monomer. Mg(2+) serves as cofactor. Expressed in roots, leaves, flowers, anthers and embryos.

The enzyme catalyses 1D-myo-inositol 3,4,5,6-tetrakisphosphate + ATP = 1D-myo-inositol 1,3,4,5,6-pentakisphosphate + ADP + H(+). The catalysed reaction is 1D-myo-inositol 1,3,4-trisphosphate + ATP = 1D-myo-inositol 1,3,4,5-tetrakisphosphate + ADP + H(+). It carries out the reaction 1D-myo-inositol 1,3,4-trisphosphate + ATP = 1D-myo-inositol 1,3,4,6-tetrakisphosphate + ADP + H(+). Functionally, kinase that can phosphorylate various inositol polyphosphate such as Ins(3,4,5,6)P4 or Ins(1,3,4)P3 and participates in phytic acid biosynthesis in developing seeds. Phytic acid is the primary storage form of phosphorus in cereal grains and other plant seeds. This chain is Inositol-tetrakisphosphate 1-kinase 1, found in Oryza sativa subsp. japonica (Rice).